The chain runs to 639 residues: Chaperone protein HtpG (639 aa).

The segment at 1–347 is a; substrate-binding; sequence MSHQETHGFQ…SNDLPLNVSR (347 aa). Residues 348-564 form a b region; sequence EILQDNKITT…AGEMSSQMIK (217 aa). Residues 565–639 are c; it reads LMQAAGQAVT…MNKMLLASVK (75 aa).

Belongs to the heat shock protein 90 family. In terms of assembly, homodimer.

The protein localises to the cytoplasm. Molecular chaperone. Has ATPase activity. The protein is Chaperone protein HtpG of Shewanella loihica (strain ATCC BAA-1088 / PV-4).